The following is a 395-amino-acid chain: MANDYLFTSESVSEGHPDKVADQISDAILDAILEQDKYSRVAAETLCNTGLVVLAGEITTTANIDYIQIARDTIKRIGYDNTDYGIDYKGCAVLVAYDKQSPDIAQGVDRAHDDNLDQGAGDQGLMFGYACDETPELMPLPIYLSHRLVERQASLRRDGRLQWLRPDAKSQVTVRYVDGKPDSIDTVVLSTQHAPDIELPALREAVIEEIIKPTLPADLIKGDIKFLVNPTGRFVIGGPQGDCGLTGRKIIVDTYGGAAPHGGGAFSGKDPSKVDRSAAYAGRYVAKNIVAAGLASRALIQVSYAIGVAEPTSVMVNTFGTGRVSDAVITKLVREHFDLRPKGIIKMLDLLRPIYEKTAAYGHFGREEPEFSWEATDKALALAEAAGVEPTARVA.

Residue H16 participates in ATP binding. Mg(2+) is bound at residue D18. E44 contacts K(+). The L-methionine site is built by E57 and Q100. The tract at residues 100–110 (QSPDIAQGVDR) is flexible loop. Residues 167–169 (DAK), 233–234 (RF), D242, 248–249 (RK), A265, and K269 each bind ATP. An L-methionine-binding site is contributed by D242. K273 provides a ligand contact to L-methionine.

The protein belongs to the AdoMet synthase family. As to quaternary structure, homotetramer; dimer of dimers. It depends on Mg(2+) as a cofactor. K(+) serves as cofactor.

The protein localises to the cytoplasm. It carries out the reaction L-methionine + ATP + H2O = S-adenosyl-L-methionine + phosphate + diphosphate. It functions in the pathway amino-acid biosynthesis; S-adenosyl-L-methionine biosynthesis; S-adenosyl-L-methionine from L-methionine: step 1/1. Catalyzes the formation of S-adenosylmethionine (AdoMet) from methionine and ATP. The overall synthetic reaction is composed of two sequential steps, AdoMet formation and the subsequent tripolyphosphate hydrolysis which occurs prior to release of AdoMet from the enzyme. This is S-adenosylmethionine synthase from Burkholderia cenocepacia (strain ATCC BAA-245 / DSM 16553 / LMG 16656 / NCTC 13227 / J2315 / CF5610) (Burkholderia cepacia (strain J2315)).